The primary structure comprises 426 residues: MRYQRPKGTADILPGDSEKWQYVEATARAVFKTYQFKEIRTPMFENFEVFSRSAGDTSDIVTKEMYDFHDKGDRHITLRPEGTAGVVRAFVENKLYGPQVLKPYKVYYMGPMFRYERPQSGRLREFHQLGVEAFGSESAALDVEVIAMGYNLLKTFGLTDLKLVINTLGDQQTRDDYRQALIDYLEPHFDELSDDSKERLHKNPLRVLDSKAPEDQQFVADAPSILDYLSPEAQAHFDQTKTYLDALAIPYEIDATMVRGLDYYNHTIFEIMTHSKALGKGYTTICAGGRYNGLVKELGGPEVSGVGFGLGVERLLVLMDAENIAVPTDDQLDVYVVGIGDTASATTLKLVQALRAAGYKAERDYLDRKPKAQFKSADRLNARYTMTVGETELADQVVNLKAMATGEETKVAMADIYQDAHQVLDK.

It belongs to the class-II aminoacyl-tRNA synthetase family. In terms of assembly, homodimer.

It localises to the cytoplasm. The enzyme catalyses tRNA(His) + L-histidine + ATP = L-histidyl-tRNA(His) + AMP + diphosphate + H(+). The protein is Histidine--tRNA ligase of Lactiplantibacillus plantarum (strain ATCC BAA-793 / NCIMB 8826 / WCFS1) (Lactobacillus plantarum).